The following is a 160-amino-acid chain: Cytochrome b6-f complex subunit 4 (160 aa).

The next 3 helical transmembrane spans lie at 36–56 (IFYMFPVVIFGTFAGVIGLAV), 96–116 (LGVLLMAAVPAGLITVPFIKI), and 131–151 (TVFLVGTVAAIWLGIGAALPI).

The protein belongs to the cytochrome b family. PetD subfamily. The 4 large subunits of the cytochrome b6-f complex are cytochrome b6, subunit IV (17 kDa polypeptide, petD), cytochrome f and the Rieske protein, while the 4 small subunits are petG, petL, petM and petN. The complex functions as a dimer.

It is found in the plastid. The protein resides in the chloroplast thylakoid membrane. Its function is as follows. Component of the cytochrome b6-f complex, which mediates electron transfer between photosystem II (PSII) and photosystem I (PSI), cyclic electron flow around PSI, and state transitions. The sequence is that of Cytochrome b6-f complex subunit 4 from Auxenochlorella protothecoides (Green microalga).